Consider the following 827-residue polypeptide: Leucine--tRNA ligase (827 aa).

The 'HIGH' region signature appears at 42–52; that stretch reads PYPSGKLHMGH. A 'KMSKS' region motif is present at residues 583–587; it reads KMSKS. Position 586 (Lys-586) interacts with ATP.

This sequence belongs to the class-I aminoacyl-tRNA synthetase family.

Its subcellular location is the cytoplasm. It carries out the reaction tRNA(Leu) + L-leucine + ATP = L-leucyl-tRNA(Leu) + AMP + diphosphate. The polypeptide is Leucine--tRNA ligase (Pelotomaculum thermopropionicum (strain DSM 13744 / JCM 10971 / SI)).